The primary structure comprises 313 residues: DNA-directed RNA polymerase subunit alpha (313 aa).

The alpha N-terminal domain (alpha-NTD) stretch occupies residues 1 to 226; the sequence is MLEIEKPKIE…EHMRLFLGLT (226 aa). The tract at residues 242 to 313 is alpha C-terminal domain (alpha-CTD); the sequence is TRDRLMDMSI…LGLSLRSSEE (72 aa).

Belongs to the RNA polymerase alpha chain family. In terms of assembly, homodimer. The RNAP catalytic core consists of 2 alpha, 1 beta, 1 beta' and 1 omega subunit. When a sigma factor is associated with the core the holoenzyme is formed, which can initiate transcription.

It catalyses the reaction RNA(n) + a ribonucleoside 5'-triphosphate = RNA(n+1) + diphosphate. DNA-dependent RNA polymerase catalyzes the transcription of DNA into RNA using the four ribonucleoside triphosphates as substrates. The sequence is that of DNA-directed RNA polymerase subunit alpha from Moorella thermoacetica (strain ATCC 39073 / JCM 9320).